Consider the following 556-residue polypeptide: Guanine nucleotide-binding protein-like 3 homolog (556 aa).

A disordered region spans residues 29–50 (NRKVKKEAKKNGTTNKKEKTIS). Residues 58-95 (KEEILVQAEQEREKIKVRQEAAKEAAKIHRIEKRKNNL) adopt a coiled-coil conformation. One can recognise a CP-type G domain in the interval 138–317 (ASEVRKTVEI…LIDSPGVILV (180 aa)). Residues 184-187 (NKID), 266-273 (GFPNVGKS), and 310-313 (DSPG) contribute to the GTP site. 2 disordered regions span residues 461–508 (APHN…PESL) and 525–556 (KKQKKKSKKTANRADKLSDSLGNMLGGDAMEM). Acidic residues predominate over residues 466-478 (DEEEDDDDEMETD). Residues 525-535 (KKQKKKSKKTA) are compositionally biased toward basic residues.

This sequence belongs to the TRAFAC class YlqF/YawG GTPase family.

The protein localises to the nucleus. Its function is as follows. May play a role in regulating cellular proliferation in both germline and somatic tissues. The polypeptide is Guanine nucleotide-binding protein-like 3 homolog (Caenorhabditis elegans).